The primary structure comprises 299 residues: MPPECGGPPMPLDPLTLRPLAPSETATYLAPAKVNLGLSVRGLRTDGYHELHSVMVPLVVGDELEIAAADTLTLRVEGAALPTDERNLVYRAARAYLDAAGVSGGATITLRKRLPLASGLGGGSSDAATTLMALARLFPAPVNLPALALTLGADVPFFLLGQAALAQGIGDVLTPLPVPQVPLVLVNPGVEVSARDAYAWLDEEEAFTPPLDVEGLLAALTAQHELPTFNALQGPVAARHAPIQAALAALSSAGLRSPLMSGSGATCFALAASDAQAHAAAQALQAQHPAWWVVATRTL.

Lys-33 is an active-site residue. 115-125 contacts ATP; sequence PLASGLGGGSS. Residue Asp-154 is part of the active site.

Belongs to the GHMP kinase family. IspE subfamily.

It carries out the reaction 4-CDP-2-C-methyl-D-erythritol + ATP = 4-CDP-2-C-methyl-D-erythritol 2-phosphate + ADP + H(+). It functions in the pathway isoprenoid biosynthesis; isopentenyl diphosphate biosynthesis via DXP pathway; isopentenyl diphosphate from 1-deoxy-D-xylulose 5-phosphate: step 3/6. Catalyzes the phosphorylation of the position 2 hydroxy group of 4-diphosphocytidyl-2C-methyl-D-erythritol. The protein is 4-diphosphocytidyl-2-C-methyl-D-erythritol kinase of Deinococcus geothermalis (strain DSM 11300 / CIP 105573 / AG-3a).